The primary structure comprises 142 residues: uncharacterized protein (142 aa).

The Peptidase C39 domain maps to 18 to 137 (QSSGYSCGPA…KIFTGNVLVV (120 aa)).

This is an uncharacterized protein from Methanothermobacter marburgensis (strain ATCC BAA-927 / DSM 2133 / JCM 14651 / NBRC 100331 / OCM 82 / Marburg) (Methanobacterium thermoautotrophicum).